A 143-amino-acid chain; its full sequence is Large ribosomal subunit protein uL11 (143 aa).

The protein belongs to the universal ribosomal protein uL11 family. As to quaternary structure, part of the ribosomal stalk of the 50S ribosomal subunit. Interacts with L10 and the large rRNA to form the base of the stalk. L10 forms an elongated spine to which L12 dimers bind in a sequential fashion forming a multimeric L10(L12)X complex. One or more lysine residues are methylated.

In terms of biological role, forms part of the ribosomal stalk which helps the ribosome interact with GTP-bound translation factors. The polypeptide is Large ribosomal subunit protein uL11 (Clavibacter michiganensis subsp. michiganensis (strain NCPPB 382)).